Here is a 99-residue protein sequence, read N- to C-terminus: MKITEKEVRYVAGLANLNLTEQEIARMQVDLDGILEHMARLNEIDTEGVAPMSQVLFEAEETATLRPDSPIPPLGNQAAMANAPQSGAGYFKVPKVIER.

It belongs to the GatC family. Heterotrimer of A, B and C subunits.

It carries out the reaction L-glutamyl-tRNA(Gln) + L-glutamine + ATP + H2O = L-glutaminyl-tRNA(Gln) + L-glutamate + ADP + phosphate + H(+). It catalyses the reaction L-aspartyl-tRNA(Asn) + L-glutamine + ATP + H2O = L-asparaginyl-tRNA(Asn) + L-glutamate + ADP + phosphate + 2 H(+). Allows the formation of correctly charged Asn-tRNA(Asn) or Gln-tRNA(Gln) through the transamidation of misacylated Asp-tRNA(Asn) or Glu-tRNA(Gln) in organisms which lack either or both of asparaginyl-tRNA or glutaminyl-tRNA synthetases. The reaction takes place in the presence of glutamine and ATP through an activated phospho-Asp-tRNA(Asn) or phospho-Glu-tRNA(Gln). The polypeptide is Aspartyl/glutamyl-tRNA(Asn/Gln) amidotransferase subunit C (Solibacter usitatus (strain Ellin6076)).